The chain runs to 600 residues: Elongation factor 4 (600 aa).

Positions 4–186 (SKIRNFSIIA…AIVEKIPSPS (183 aa)) constitute a tr-type G domain. Residues 16 to 21 (DHGKST) and 133 to 136 (NKID) contribute to the GTP site.

The protein belongs to the TRAFAC class translation factor GTPase superfamily. Classic translation factor GTPase family. LepA subfamily.

The protein resides in the cell membrane. It catalyses the reaction GTP + H2O = GDP + phosphate + H(+). In terms of biological role, required for accurate and efficient protein synthesis under certain stress conditions. May act as a fidelity factor of the translation reaction, by catalyzing a one-codon backward translocation of tRNAs on improperly translocated ribosomes. Back-translocation proceeds from a post-translocation (POST) complex to a pre-translocation (PRE) complex, thus giving elongation factor G a second chance to translocate the tRNAs correctly. Binds to ribosomes in a GTP-dependent manner. The protein is Elongation factor 4 of Mycoplasma mycoides subsp. mycoides SC (strain CCUG 32753 / NCTC 10114 / PG1).